Here is a 103-residue protein sequence, read N- to C-terminus: Large ribosomal subunit protein uL23 (103 aa).

Belongs to the universal ribosomal protein uL23 family. Part of the 50S ribosomal subunit. Contacts protein L29, and trigger factor when it is bound to the ribosome.

Its function is as follows. One of the early assembly proteins it binds 23S rRNA. One of the proteins that surrounds the polypeptide exit tunnel on the outside of the ribosome. Forms the main docking site for trigger factor binding to the ribosome. The chain is Large ribosomal subunit protein uL23 from Zymomonas mobilis subsp. mobilis (strain ATCC 31821 / ZM4 / CP4).